The sequence spans 227 residues: LysM and putative peptidoglycan-binding domain-containing protein 1 (227 aa).

2 positions are modified to phosphoserine: Ser-23 and Ser-33. Residues Leu-40–Ile-84 form the LysM domain. Positions Asn-95–Phe-157 are disordered. Over residues Asp-98–Glu-108 the composition is skewed to acidic residues. A Phosphoserine modification is found at Ser-99. Positions Gln-143–Leu-152 are enriched in polar residues. Phosphoserine is present on residues Ser-166, Ser-181, Ser-194, and Ser-212. A disordered region spans residues Lys-169–Leu-227. Residues Thr-216–Leu-227 show a composition bias toward basic and acidic residues.

This Rattus norvegicus (Rat) protein is LysM and putative peptidoglycan-binding domain-containing protein 1 (Lysmd1).